We begin with the raw amino-acid sequence, 417 residues long: NADH-quinone oxidoreductase subunit D (417 aa).

This sequence belongs to the complex I 49 kDa subunit family. NDH-1 is composed of 14 different subunits. Subunits NuoB, C, D, E, F, and G constitute the peripheral sector of the complex.

It localises to the cell inner membrane. It catalyses the reaction a quinone + NADH + 5 H(+)(in) = a quinol + NAD(+) + 4 H(+)(out). NDH-1 shuttles electrons from NADH, via FMN and iron-sulfur (Fe-S) centers, to quinones in the respiratory chain. The immediate electron acceptor for the enzyme in this species is believed to be ubiquinone. Couples the redox reaction to proton translocation (for every two electrons transferred, four hydrogen ions are translocated across the cytoplasmic membrane), and thus conserves the redox energy in a proton gradient. The chain is NADH-quinone oxidoreductase subunit D from Halorhodospira halophila (strain DSM 244 / SL1) (Ectothiorhodospira halophila (strain DSM 244 / SL1)).